Consider the following 325-residue polypeptide: Lactonase drp35 (325 aa).

Residues Glu46, Ser108, Gly110, Glu128, Thr131, Tyr133, Asp136, Asn183, Asp234, and Ser235 each coordinate Ca(2+). Asp234 acts as the Proton donor in catalysis.

This sequence belongs to the SMP-30/CGR1 family. Requires Ca(2+) as cofactor.

The protein resides in the cytoplasm. Its function is as follows. Exhibits lactonase activity. Acts in cells with perturbed membrane integrity and is possibly related to the membrane homeostasis. This Staphylococcus haemolyticus (strain JCSC1435) protein is Lactonase drp35 (drp35).